Consider the following 305-residue polypeptide: Serine/threonine-protein kinase 16 (305 aa).

Residue Gly2 is the site of N-myristoyl glycine attachment. S-palmitoyl cysteine attachment occurs at residues Cys6 and Cys8. Positions 20–293 (YLFVQKLGEG…PVLLSQLEAL (274 aa)) constitute a Protein kinase domain. ATP contacts are provided by residues 26 to 34 (LGEGGFSYV) and Lys49. Asp148 serves as the catalytic Proton acceptor. The tract at residues 166-202 (DLGSMNQACIQVEGSRQALALQDWAAQRCTISYRAPE) is activation loop. At Ser197 the chain carries Phosphoserine; by autocatalysis. Tyr198 bears the Phosphotyrosine; by autocatalysis mark.

The protein belongs to the protein kinase superfamily. Ser/Thr protein kinase family. As to quaternary structure, monomer. Interacts with DRG1 (via its N-terminal); the interaction phosphorylates DRG1. Mainly autophosphorylated on serine/threonine residues. Also autophosphorylated on Tyr-198. Ubiquitously expressed at low levels. Relatively higher levels in testis, kidney and liver.

It is found in the cytoplasm. Its subcellular location is the perinuclear region. The protein resides in the membrane. The catalysed reaction is L-seryl-[protein] + ATP = O-phospho-L-seryl-[protein] + ADP + H(+). The enzyme catalyses L-threonyl-[protein] + ATP = O-phospho-L-threonyl-[protein] + ADP + H(+). It carries out the reaction L-tyrosyl-[protein] + ATP = O-phospho-L-tyrosyl-[protein] + ADP + H(+). Its function is as follows. Membrane-associated protein kinase that phosphorylates on serine and threonine residues. In vitro substrates include DRG1, ENO1 and EIF4EBP1. Also autophosphorylates. May be involved in secretory vesicle trafficking or intracellular signaling. May have a role in regulating stromal-epithelial interactions that occur during ductal morphogenesis in the mammary gland. May be involved in TGF-beta signaling. Able to autophosphorylate on Tyr residue; it is however unclear whether it has tyrosine-protein kinase toward other proteins. This chain is Serine/threonine-protein kinase 16 (Stk16), found in Mus musculus (Mouse).